Here is a 432-residue protein sequence, read N- to C-terminus: D-amino acid dehydrogenase (432 aa).

3–17 (VVILGSGVVGVASAW) lines the FAD pocket.

This sequence belongs to the DadA oxidoreductase family. The cofactor is FAD.

The enzyme catalyses a D-alpha-amino acid + A + H2O = a 2-oxocarboxylate + AH2 + NH4(+). The protein operates within amino-acid degradation; D-alanine degradation; NH(3) and pyruvate from D-alanine: step 1/1. Functionally, oxidative deamination of D-amino acids. The polypeptide is D-amino acid dehydrogenase (Shigella dysenteriae serotype 1 (strain Sd197)).